A 168-amino-acid chain; its full sequence is Sensor histidine kinase component HK1 (168 aa).

Residues 1–141 (MPITPLLHES…ELRITLPTPR (141 aa)) enclose the Histidine kinase; second part domain. The interval 137–168 (LPTPRPPFHEELPRITSSDTKDPNREHDTSDQ) is disordered. Residues 143–168 (PFHEELPRITSSDTKDPNREHDTSDQ) show a composition bias toward basic and acidic residues.

In terms of assembly, interacts with HK2.

The enzyme catalyses ATP + protein L-histidine = ADP + protein N-phospho-L-histidine.. Its function is as follows. Member of the three-protein two-component system HK1/HK2/TcrA. Kinase that binds ATP and catalyzes the transfer of a phosphoryl group from ATP to HK2. The protein is Sensor histidine kinase component HK1 of Mycobacterium tuberculosis (strain ATCC 25618 / H37Rv).